A 157-amino-acid chain; its full sequence is Transcriptional repressor NrdR (157 aa).

The segment at 3-34 (CSNCQNKNTKVLDSRPIEEGRAIRRRRECERC) is a zinc-finger region. Positions 49–139 (LIVVKKDGVR…VYRQFKDITV (91 aa)) constitute an ATP-cone domain.

It belongs to the NrdR family. Zn(2+) is required as a cofactor.

Negatively regulates transcription of bacterial ribonucleotide reductase nrd genes and operons by binding to NrdR-boxes. The polypeptide is Transcriptional repressor NrdR (Oceanobacillus iheyensis (strain DSM 14371 / CIP 107618 / JCM 11309 / KCTC 3954 / HTE831)).